We begin with the raw amino-acid sequence, 313 residues long: Platelet glycoprotein VI (313 aa).

The first 21 residues, 1–21 (MSPASPTFFCIGLCVLQVIQT), serve as a signal peptide directing secretion. Over 22-265 (QSGPLPKPSL…FGFAHQHYAK (244 aa)) the chain is Extracellular. 2 Ig-like C2-type domains span residues 27–105 (PKPS…DQLE) and 115–197 (PSLS…APSD). Residues cysteine 49 and cysteine 89 are joined by a disulfide bond. A glycan (N-linked (GlcNAc...) asparagine) is linked at asparagine 93. A disulfide bridge links cysteine 135 with cysteine 181. The disordered stretch occupies residues 213 to 236 (VPTEESFPVTESSRRPSILPTNKI). N-linked (GlcNAc...) asparagine glycosylation is present at asparagine 244. The helical transmembrane segment at 266–286 (GNLVRICLGATIIIILLGLLA) threads the bilayer. The Cytoplasmic portion of the chain corresponds to 287-313 (EDWHSRKKCLQHRMRALQRPLPPLPLA).

As to quaternary structure, associated with Fc receptor gamma chain. The GPVI:FcRgamma complex is associated with the Src kinase family FYN and LYN. Interacts with TRAF4. Interacts with COL1A1, but not with COL4A4. In terms of tissue distribution, megakaryocytes and platelets.

Its subcellular location is the cell membrane. Collagen receptor involved in collagen-induced platelet adhesion and activation. Plays a key role in platelet procoagulant activity and subsequent thrombin and fibrin formation. This procoagulant function may contribute to arterial and venous thrombus formation. The signaling pathway involves the FcR gamma-chain, the Src kinases (likely FYN or LYN) and SYK, the adapter protein LAT and leads to the activation of PLCG2. The chain is Platelet glycoprotein VI from Mus musculus (Mouse).